The following is a 187-amino-acid chain: GTP cyclohydrolase 1 (187 aa).

The Zn(2+) site is built by Cys74, His77, and Cys145.

The protein belongs to the GTP cyclohydrolase I family. As to quaternary structure, homomer.

It carries out the reaction GTP + H2O = 7,8-dihydroneopterin 3'-triphosphate + formate + H(+). Its pathway is cofactor biosynthesis; 7,8-dihydroneopterin triphosphate biosynthesis; 7,8-dihydroneopterin triphosphate from GTP: step 1/1. The sequence is that of GTP cyclohydrolase 1 from Sulfurihydrogenibium sp. (strain YO3AOP1).